Reading from the N-terminus, the 1160-residue chain is Large proline-rich protein BAG6 (1160 aa).

The region spanning I7–S82 is the Ubiquitin-like domain. 8 disordered regions span residues E76–S114, E206–P261, I367–T422, A478–Q547, G563–A628, S672–L711, S962–W1038, and Y1126–A1160. Over residues P85 to G94 the composition is skewed to gly residues. Composition is skewed to low complexity over residues S95–A110 and S223–D233. Polar residues-rich tracts occupy residues Q247–N257 and L371–G417. Composition is skewed to low complexity over residues A478–Q495 and T566–S614. Residues F677–P698 are compositionally biased toward pro residues. Positions A699–A708 are enriched in low complexity. Basic and acidic residues predominate over residues S1132 to H1146.

As to quaternary structure, component of the bag6/bat3 complex.

The protein resides in the cytoplasm. Its subcellular location is the cytosol. It localises to the nucleus. It is found in the secreted. The protein localises to the extracellular exosome. In terms of biological role, ATP-independent molecular chaperone preventing the aggregation of misfolded and hydrophobic patches-containing proteins. Functions as part of a cytosolic protein quality control complex, the bag6/bat3 complex, which maintains these client proteins in a soluble state and participates in their proper delivery to the endoplasmic reticulum or alternatively can promote their sorting to the proteasome where they undergo degradation. The bag6/bat3 complex is involved in the post-translational delivery of tail-anchored/type II transmembrane proteins to the endoplasmic reticulum membrane. Similarly, the bag6/bat3 complex also functions as a sorting platform for proteins of the secretory pathway that are mislocalized to the cytosol either delivering them to the proteasome for degradation or to the endoplasmic reticulum. The bag6/bat3 complex also plays a role in the endoplasmic reticulum-associated degradation (ERAD), a quality control mechanism that eliminates unwanted proteins of the endoplasmic reticulum through their retrotranslocation to the cytosol and their targeting to the proteasome. It maintains these retrotranslocated proteins in an unfolded yet soluble state condition in the cytosol to ensure their proper delivery to the proteasome. Also required for selective ubiquitin-mediated degradation of defective nascent chain polypeptides by the proteasome. Also involved in endoplasmic reticulum stress-induced pre-emptive quality control, a mechanism that selectively attenuates the translocation of newly synthesized proteins into the endoplasmic reticulum and reroutes them to the cytosol for proteasomal degradation. May ensure the proper degradation of these proteins and thereby protects the endoplasmic reticulum from protein overload upon stress. By stabilizing a large spectrum of proteins, may indirectly affect different biological processes including apoptosis. By controlling the steady-state expression of the IGF1R receptor, indirectly regulates the insulin-like growth factor receptor signaling pathway. Functionally, when nuclear, may also act as a component of some chromatin regulator complex. The polypeptide is Large proline-rich protein BAG6 (Danio rerio (Zebrafish)).